The chain runs to 169 residues: Crossover junction endodeoxyribonuclease RuvC (169 aa).

Residues Asp-11, Glu-71, and Asp-143 contribute to the active site. Mg(2+) is bound by residues Asp-11, Glu-71, and Asp-143.

This sequence belongs to the RuvC family. As to quaternary structure, homodimer which binds Holliday junction (HJ) DNA. The HJ becomes 2-fold symmetrical on binding to RuvC with unstacked arms; it has a different conformation from HJ DNA in complex with RuvA. In the full resolvosome a probable DNA-RuvA(4)-RuvB(12)-RuvC(2) complex forms which resolves the HJ. Requires Mg(2+) as cofactor.

Its subcellular location is the cytoplasm. The enzyme catalyses Endonucleolytic cleavage at a junction such as a reciprocal single-stranded crossover between two homologous DNA duplexes (Holliday junction).. In terms of biological role, the RuvA-RuvB-RuvC complex processes Holliday junction (HJ) DNA during genetic recombination and DNA repair. Endonuclease that resolves HJ intermediates. Cleaves cruciform DNA by making single-stranded nicks across the HJ at symmetrical positions within the homologous arms, yielding a 5'-phosphate and a 3'-hydroxyl group; requires a central core of homology in the junction. The consensus cleavage sequence is 5'-(A/T)TT(C/G)-3'. Cleavage occurs on the 3'-side of the TT dinucleotide at the point of strand exchange. HJ branch migration catalyzed by RuvA-RuvB allows RuvC to scan DNA until it finds its consensus sequence, where it cleaves and resolves the cruciform DNA. This chain is Crossover junction endodeoxyribonuclease RuvC, found in Rhizobium etli (strain CIAT 652).